Here is a 490-residue protein sequence, read N- to C-terminus: 4-hydroxyphenylacetaldehyde synthase (490 aa).

Pro97, His198, and His313 together coordinate L-phenylalanine. Lys314 is modified (N6-(pyridoxal phosphate)lysine). Phe343 serves as a coordination point for L-phenylalanine.

Belongs to the group II decarboxylase family. As to quaternary structure, homodimer. Pyridoxal 5'-phosphate is required as a cofactor.

The catalysed reaction is L-tyrosine + O2 + H2O + H(+) = (4-hydroxyphenyl)acetaldehyde + H2O2 + NH4(+) + CO2. Its function is as follows. Catalyzes the production of 4-hydroxyphenylacetaldehyde (HPAA) directly from L-tyrosine, tyramine not being formed as an intermediate. This chain is 4-hydroxyphenylacetaldehyde synthase, found in Rhodiola rosea (Roseroot).